The sequence spans 394 residues: Phosphoglycerate kinase (394 aa).

Residues 21–23 (DFN), Arg36, 59–62 (HLGR), Arg118, and Arg151 contribute to the substrate site. At Ser183 the chain carries Phosphoserine. Lys201 and Gly292 together coordinate ATP. The residue at position 299 (Thr299) is a Phosphothreonine. ATP contacts are provided by residues Glu323 and 350–353 (GGDS).

This sequence belongs to the phosphoglycerate kinase family. In terms of assembly, monomer.

It is found in the cytoplasm. The catalysed reaction is (2R)-3-phosphoglycerate + ATP = (2R)-3-phospho-glyceroyl phosphate + ADP. It functions in the pathway carbohydrate degradation; glycolysis; pyruvate from D-glyceraldehyde 3-phosphate: step 2/5. This chain is Phosphoglycerate kinase, found in Bacillus anthracis (strain A0248).